Reading from the N-terminus, the 499-residue chain is Glycerol kinase (499 aa).

Position 17 (T17) interacts with ADP. T17, T18, and S19 together coordinate ATP. Residue T17 participates in sn-glycerol 3-phosphate binding. R21 lines the ADP pocket. Sn-glycerol 3-phosphate contacts are provided by R87, E88, Y139, and D243. Glycerol-binding residues include R87, E88, Y139, D243, and Q244. ADP contacts are provided by T265 and G308. 4 residues coordinate ATP: T265, G308, Q312, and G409. Residues G409 and N413 each coordinate ADP.

The protein belongs to the FGGY kinase family.

The enzyme catalyses glycerol + ATP = sn-glycerol 3-phosphate + ADP + H(+). It participates in polyol metabolism; glycerol degradation via glycerol kinase pathway; sn-glycerol 3-phosphate from glycerol: step 1/1. Inhibited by fructose 1,6-bisphosphate (FBP). In terms of biological role, key enzyme in the regulation of glycerol uptake and metabolism. Catalyzes the phosphorylation of glycerol to yield sn-glycerol 3-phosphate. This is Glycerol kinase from Pseudomonas entomophila (strain L48).